A 597-amino-acid polypeptide reads, in one-letter code: Replication protein E1 (597 aa).

A Nuclear localization signal motif is present at residues 75–77 (KRK). 3 positions are modified to phosphoserine; by host: S81, S91, and S104. The short motif at 90–99 (LSPQLASISL) is the Nuclear export signal element. The segment at 119 to 141 (QSSNEADDSLEGQRQVEPLPGRE) is disordered. A DNA-binding region region spans residues 137-300 (LPGREENGAD…TLITHHLAAE (164 aa)). In terms of domain architecture, SF3 helicase spans 400–550 (IEFILFLADF…FPLDDNGNPG (151 aa)). 426-433 (GPPNTGKS) contributes to the ATP binding site. A Glycyl lysine isopeptide (Lys-Gly) (interchain with G-Cter in SUMO) cross-link involves residue K507. The disordered stretch occupies residues 574–597 (PEDGEDGETQRGLRLTARGTTESV).

It belongs to the papillomaviridae E1 protein family. As to quaternary structure, can form hexamers. Interacts with E2 protein; this interaction increases E1 DNA binding specificity. Interacts with host DNA polymerase subunit POLA2. Interacts with host single stranded DNA-binding protein RPA1. Interacts with host TOP1; this interaction stimulates the enzymatic activity of TOP1. In terms of processing, phosphorylated. Post-translationally, sumoylated.

The protein localises to the host nucleus. The enzyme catalyses Couples ATP hydrolysis with the unwinding of duplex DNA by translocating in the 3'-5' direction.. The catalysed reaction is ATP + H2O = ADP + phosphate + H(+). ATP-dependent DNA 3'-5' helicase required for initiation of viral DNA replication. It forms a complex with the viral E2 protein. The E1-E2 complex binds to the replication origin which contains binding sites for both proteins. During the initial step, a dimer of E1 interacts with a dimer of protein E2 leading to a complex that binds the viral origin of replication with high specificity. Then, a second dimer of E1 displaces the E2 dimer in an ATP-dependent manner to form the E1 tetramer. Following this, two E1 monomers are added to each half of the site, which results in the formation of two E1 trimers on the viral ori. Subsequently, two hexamers will be created. The double hexamer acts as a bi-directional helicase machinery and unwinds the viral DNA and then recruits the host DNA polymerase to start replication. This chain is Replication protein E1, found in Canis lupus familiaris (Dog).